We begin with the raw amino-acid sequence, 674 residues long: Probable protein phosphatase 2C 66 (674 aa).

S125 bears the Phosphoserine mark. Disordered stretches follow at residues 153–175 (YSGPIESTKKTEKEKPKKIRKKP) and 202–247 (KSVI…KQSM). The 422-residue stretch at 244–665 (KQSMNSVLDV…DDVSVIVISL (422 aa)) folds into the PPM-type phosphatase domain. Residues D282 and G283 each coordinate Mn(2+). Over residues 373-384 (NNKTKSDNRCDQ) the composition is skewed to basic and acidic residues. The tract at residues 373–392 (NNKTKSDNRCDQKGSNSTTT) is disordered. Mn(2+) is bound by residues D593 and D656.

This sequence belongs to the PP2C family. It depends on Mg(2+) as a cofactor. Mn(2+) serves as cofactor. Expressed at low level in seedlings, roots, leaves, stems, young inflorescences, flowers and siliques.

The protein resides in the nucleus. The enzyme catalyses O-phospho-L-seryl-[protein] + H2O = L-seryl-[protein] + phosphate. It carries out the reaction O-phospho-L-threonyl-[protein] + H2O = L-threonyl-[protein] + phosphate. The polypeptide is Probable protein phosphatase 2C 66 (PLL2) (Arabidopsis thaliana (Mouse-ear cress)).